The sequence spans 160 residues: Cytochrome b6-f complex subunit 4 (160 aa).

The next 3 membrane-spanning stretches (helical) occupy residues 36–56 (LLYIFPVVILGTIACNVGLAV), 95–115 (LLGVLLMASVPAGLLTVPFLE), and 131–151 (TVFLVGTVVALWLGIGATLPI).

This sequence belongs to the cytochrome b family. PetD subfamily. As to quaternary structure, the 4 large subunits of the cytochrome b6-f complex are cytochrome b6, subunit IV (17 kDa polypeptide, petD), cytochrome f and the Rieske protein, while the 4 small subunits are petG, petL, petM and petN. The complex functions as a dimer.

It is found in the plastid. It localises to the chloroplast thylakoid membrane. Functionally, component of the cytochrome b6-f complex, which mediates electron transfer between photosystem II (PSII) and photosystem I (PSI), cyclic electron flow around PSI, and state transitions. This chain is Cytochrome b6-f complex subunit 4, found in Spinacia oleracea (Spinach).